The following is a 141-amino-acid chain: Hemoglobin subunit alpha-A (141 aa).

The region spanning 1 to 141 is the Globin domain; sequence VLNAGDKANV…VGTVLTSKYR (141 aa). His-58 is an O2 binding site. His-87 contributes to the heme b binding site.

Belongs to the globin family. As to quaternary structure, heterotetramer of two alpha chains and two beta chains. As to expression, red blood cells.

Involved in oxygen transport from the lung to the various peripheral tissues. The sequence is that of Hemoglobin subunit alpha-A (HBAA) from Chrysemys picta bellii (Western painted turtle).